The chain runs to 808 residues: Probable E3 ubiquitin-protein ligase hulA (808 aa).

Positions 1–112 constitute a C2 domain; sequence MGSNLPAQPN…QMGGDEMLTR (112 aa). Disordered stretches follow at residues 134–231 and 275–346; these read NLST…GWER and RRAH…YFVD. Composition is skewed to polar residues over residues 142–159 and 171–198; these read QANG…SSGL and GPSQ…PSST. The span at 199-210 shows a compositional bias: low complexity; that stretch reads VAPVNGAAAPGA. Over residues 211–220 the composition is skewed to polar residues; the sequence is SRTNLSSFED. The region spanning 223 to 256 is the WW 1 domain; that stretch reads GRLPAGWERREDNLGRTYYVDHNTRTTTWTRPSS. A compositionally biased stretch (basic and acidic residues) spans 275–288; that stretch reads RRAHQSRMLPEDRT. Over residues 289–303 the composition is skewed to polar residues; the sequence is GASSPNLQENQQAQT. Low complexity predominate over residues 317-326; that stretch reads ATGATTAGTG. 2 consecutive WW domains span residues 326–359 and 386–419; these read GELP…DPRR and GPLP…DPRL. Residues 475-808 enclose the HECT domain; sequence SASDLKKRLM…VEETLGFGQE (334 aa). The active-site Glycyl thioester intermediate is Cys-776.

The protein belongs to the RSP5/NEDD4 family. Interacts with creD.

Its subcellular location is the cytoplasm. It catalyses the reaction S-ubiquitinyl-[E2 ubiquitin-conjugating enzyme]-L-cysteine + [acceptor protein]-L-lysine = [E2 ubiquitin-conjugating enzyme]-L-cysteine + N(6)-ubiquitinyl-[acceptor protein]-L-lysine.. The protein operates within protein modification; protein ubiquitination. Functionally, E3 ubiquitin-protein ligase which accepts ubiquitin from an E2 ubiquitin-conjugating enzyme in the form of a thioester and then directly transfers the ubiquitin to targeted substrates. Probably involved in the regulatory network controlling carbon source utilization. This chain is Probable E3 ubiquitin-protein ligase hulA (hulA), found in Aspergillus terreus (strain NIH 2624 / FGSC A1156).